The following is a 64-amino-acid chain: Large ribosomal subunit protein bL28 (64 aa).

This sequence belongs to the bacterial ribosomal protein bL28 family.

This is Large ribosomal subunit protein bL28 from Campylobacter jejuni subsp. jejuni serotype O:6 (strain 81116 / NCTC 11828).